Reading from the N-terminus, the 616-residue chain is Zinc metalloproteinase-disintegrin-like protein H3 (616 aa).

The signal sequence occupies residues 1 to 20; the sequence is MIQVLLVIICLAVFPYQGSS. The propeptide occupies 21 to 193; that stretch reads IILESGNVND…KKASQLNLTP (173 aa). Glutamate 194 carries the post-translational modification Pyrrolidone carboxylic acid (Glu). The Peptidase M12B domain maps to 203–399; it reads KYIKLVIVAD…KMPQCILNKP (197 aa). 3 disulfide bridges follow: cysteine 314–cysteine 394, cysteine 354–cysteine 378, and cysteine 356–cysteine 361. Histidine 339 contacts Zn(2+). The short motif at 339–350 is the Metal-binding element; that stretch reads HEMGHNLGMDHD. Catalysis depends on glutamate 340, which acts as the Proton acceptor. Residues histidine 343 and histidine 349 each contribute to the Zn(2+) site. Asparagine 377 carries N-linked (GlcNAc...) asparagine glycosylation. The Disintegrin domain maps to 407–493; that stretch reads PAVCGNYLVE…ECPTDQFQRN (87 aa). Ca(2+) contacts are provided by valine 409, asparagine 412, glutamate 416, glutamate 419, and aspartate 422. 14 disulfides stabilise this stretch: cysteine 410–cysteine 439, cysteine 421–cysteine 434, cysteine 423–cysteine 429, cysteine 433–cysteine 456, cysteine 447–cysteine 453, cysteine 452–cysteine 478, cysteine 465–cysteine 485, cysteine 472–cysteine 504, cysteine 497–cysteine 509, cysteine 516–cysteine 566, cysteine 531–cysteine 577, cysteine 544–cysteine 554, cysteine 561–cysteine 603, and cysteine 597–cysteine 609. Positions 471–473 match the D/ECD-tripeptide motif; it reads ECD. The Ca(2+) site is built by aspartate 473, aspartate 476, and aspartate 488. The N-linked (GlcNAc...) asparagine glycan is linked to asparagine 506.

It belongs to the venom metalloproteinase (M12B) family. P-III subfamily. P-IIIc sub-subfamily. Homodimer; disulfide-linked. Zn(2+) serves as cofactor. Post-translationally, N-glycosylated. In terms of processing, the N-terminus is blocked. Expressed by the venom gland (at protein level). Expressed by the venom gland.

The protein resides in the secreted. The proteolytic activity requires Zn(2+) and Ca(2+) ions. The alpha-fibrinogenase activity is completely inhibited by EDTA, but not by PMSF. In terms of biological role, zinc metalloprotease that has fibrinogenolytic and hemorrhagic activities. Cleaves insulin B chain readily at '38-Ala-|-Leu-39' bond, and at a significantly slower rate, at '40-Tyr-|-Leu-41' bond. Hydrolyzes isolated extracellular matrix (ECM) bovine fibronectin, and basal membrane (BM) proteins human collagen IV and, to a lesser extent, murine laminin, in vitro. Cleaves murine nidogen (at '350-Ser-|-Phe-351' and '380-Tyr-|-Asn-381' bonds), but not laminin, in a solubilized BM preparation. Hydrolyzes plasma proteins involved in blood coagulation in vitro. It significantly prolongs thrombin time. Has potent alpha-fibrinogenase activity cleaving human fibrinogen alpha chain at '432-Lys-|-Leu-433' bond, but does not cleave beta or gamma chains. Hydrolyzes bovine prothrombin, but does not cleave it at '366-Arg-|-Ile-367' bond, which is necessary for the formation of active alpha-thrombin, however, the cleavage of fragment 1 from it leads to reduced alpha-thrombin formation. Hydrolyzes bovine factor X heavy chain at '211-Ser-|-Leu-212', '213-Asp-|-Leu-214' and '216-Gly-|-Leu-217' bonds activating it only marginally as does not cleave at the physiological activation site. Does not cleave factor X light chain. No hydrolysis or activation of plasminogen. The alpha-fibrinogenase activity likely contributes to its hemorrhagic activity, which in rat can be completely neutralized in vivo by anti-ammodytagin antibodies, which strongly cross-react with this protein. Has very weak collagen-, ADP- and ristocetin-induced platelet aggregation inhibition activity in vitro. This is Zinc metalloproteinase-disintegrin-like protein H3 from Vipera ammodytes ammodytes (Western sand viper).